Consider the following 235-residue polypeptide: MAQVDLLNVKGEKVGTLEISDFVFNIDPNYDVMWRYVDMQLSNRRAGTASTKTRGEVSGGGRKPWPQKHTGRARHGSIRSPIWRHGGIAHGPKPRDWSKKLNKKMKKLALRSALSVKYRENKLFVLDDLKLERPKTKFLKEILQNLQLSDKKTLIVLPWKDEGYMNVKLSGKNLPNVKVIIADNPNNSKNGEKAVRIDGLNVFDMLKYDYLVLTQDMVSKIEEVLGNEAGKALTE.

Residues 45–75 (RAGTASTKTRGEVSGGGRKPWPQKHTGRARH) form a disordered region. A compositionally biased stretch (basic residues) spans 65–75 (WPQKHTGRARH).

This sequence belongs to the universal ribosomal protein uL4 family. As to quaternary structure, part of the 50S ribosomal subunit.

In terms of biological role, one of the primary rRNA binding proteins, this protein initially binds near the 5'-end of the 23S rRNA. It is important during the early stages of 50S assembly. It makes multiple contacts with different domains of the 23S rRNA in the assembled 50S subunit and ribosome. Its function is as follows. Forms part of the polypeptide exit tunnel. The sequence is that of Large ribosomal subunit protein uL4 from Thermotoga petrophila (strain ATCC BAA-488 / DSM 13995 / JCM 10881 / RKU-1).